The chain runs to 215 residues: S-crystallin 2 (215 aa).

Residues 2–80 enclose the GST N-terminal domain; sequence PSYTLNYFNH…YLAREFGFHG (79 aa). Residues 82 to 215 enclose the GST C-terminal domain; it reads NNMEMARVEY…YLKKRSSTEF (134 aa).

Belongs to the GST superfamily. Lens.

S-crystallins are structural components of squids and octopi eye lens. Contains relatively little if any GST activity. In Enteroctopus dofleini (North Pacific giant octopus), this protein is S-crystallin 2.